The primary structure comprises 188 residues: Adenylate kinase (188 aa).

An ATP-binding site is contributed by 12-17; that stretch reads GVGKGT. Residues 32-61 are NMP; sequence STGDIFRSAMANHTELGDKAKSFMDAGNLV. AMP contacts are provided by residues T33, R38, 59 to 61, 89 to 92, and Q96; these read NLV and GYPR. The interval 130–136 is LID; the sequence is GRGREDD. R131 contacts ATP. 2 residues coordinate AMP: R133 and R144. ATP is bound at residue G172.

The protein belongs to the adenylate kinase family. Monomer.

Its subcellular location is the cytoplasm. It carries out the reaction AMP + ATP = 2 ADP. It participates in purine metabolism; AMP biosynthesis via salvage pathway; AMP from ADP: step 1/1. Its function is as follows. Catalyzes the reversible transfer of the terminal phosphate group between ATP and AMP. Plays an important role in cellular energy homeostasis and in adenine nucleotide metabolism. In Oenococcus oeni (strain ATCC BAA-331 / PSU-1), this protein is Adenylate kinase.